We begin with the raw amino-acid sequence, 24 residues long: 33.0 kDa cold shock protein (24 aa).

The protein belongs to the thaumatin family. In terms of assembly, homooligomer; disulfide-linked. In terms of processing, glycosylated.

It localises to the secreted. It is found in the extracellular space. The protein resides in the apoplast. This chain is 33.0 kDa cold shock protein, found in Arachis hypogaea (Peanut).